Consider the following 603-residue polypeptide: Elongation factor 4 (603 aa).

The tr-type G domain occupies 7–189; that stretch reads SRIRNFSIIA…SIVHLVPPPE (183 aa). GTP is bound by residues 19 to 24 and 136 to 139; these read DHGKST and NKID.

It belongs to the TRAFAC class translation factor GTPase superfamily. Classic translation factor GTPase family. LepA subfamily.

It is found in the cell inner membrane. It carries out the reaction GTP + H2O = GDP + phosphate + H(+). Required for accurate and efficient protein synthesis under certain stress conditions. May act as a fidelity factor of the translation reaction, by catalyzing a one-codon backward translocation of tRNAs on improperly translocated ribosomes. Back-translocation proceeds from a post-translocation (POST) complex to a pre-translocation (PRE) complex, thus giving elongation factor G a second chance to translocate the tRNAs correctly. Binds to ribosomes in a GTP-dependent manner. The sequence is that of Elongation factor 4 from Acaryochloris marina (strain MBIC 11017).